A 552-amino-acid chain; its full sequence is Putative transport protein NT01EI_3867 (552 aa).

5 helical membrane passes run 4–24 (IALT…IGNW), 26–46 (IYGV…VGHF), 65–85 (FGLI…FFSS), 90–112 (GLRL…AAIH), and 158–178 (MGYA…IWLI). 2 consecutive RCK C-terminal domains span residues 191–276 (RDFD…VIGE) and 279–361 (DTSL…IVGN). The next 6 helical transmembrane spans lie at 371–391 (MLPV…PLFI), 403–425 (AGGP…LYWF), 439–459 (IVLF…DTLL), 464–484 (VTWI…AALL), 493–513 (YLTL…LAFA), and 530–550 (VYPL…LLFW).

Belongs to the AAE transporter (TC 2.A.81) family. YidE subfamily.

It is found in the cell membrane. The polypeptide is Putative transport protein NT01EI_3867 (Edwardsiella ictaluri (strain 93-146)).